We begin with the raw amino-acid sequence, 339 residues long: Uroporphyrinogen decarboxylase (339 aa).

Substrate-binding positions include 21 to 25 (RQAGR), D71, Y146, S201, and H316.

It belongs to the uroporphyrinogen decarboxylase family. Homodimer.

The protein localises to the cytoplasm. It catalyses the reaction uroporphyrinogen III + 4 H(+) = coproporphyrinogen III + 4 CO2. Its pathway is porphyrin-containing compound metabolism; protoporphyrin-IX biosynthesis; coproporphyrinogen-III from 5-aminolevulinate: step 4/4. Catalyzes the decarboxylation of four acetate groups of uroporphyrinogen-III to yield coproporphyrinogen-III. In Rickettsia canadensis (strain McKiel), this protein is Uroporphyrinogen decarboxylase.